The primary structure comprises 136 residues: Protein PsiE (136 aa).

The next 4 helical transmembrane spans lie at 15 to 35 (ILQT…VVFL), 55 to 75 (YELV…ALIV), 82 to 102 (FHFP…RLII), and 108 to 128 (PLDV…LWLC).

It belongs to the PsiE family.

The protein localises to the cell inner membrane. In Escherichia coli (strain UTI89 / UPEC), this protein is Protein PsiE.